The chain runs to 553 residues: General alpha-glucoside permease (553 aa).

A compositionally biased stretch (polar residues) spans 1 to 21 (MSVDENQLENGQLLSSENEAS). The tract at residues 1–26 (MSVDENQLENGQLLSSENEASSPFKE) is disordered. Topologically, residues 1–33 (MSVDENQLENGQLLSSENEASSPFKESIPSRSS) are cytoplasmic. A helical transmembrane segment spans residues 34 to 54 (LYLIALTVSLLGVQLTWSVEL). At 55–72 (GYGTPYLFSLGLRKEWTS) the chain is on the extracellular side. Residues 73 to 93 (IIWIAGPLTGILIQPIAGILS) form a helical membrane-spanning segment. The Cytoplasmic portion of the chain corresponds to 94–111 (DRVNSRIGRRRPFMLCAS). The chain crosses the membrane as a helical span at residues 112 to 132 (LLGTFSLFLMGWAPDICLFIF). The Extracellular portion of the chain corresponds to 133–140 (SNEVLMKR). A helical transmembrane segment spans residues 141-161 (VTIVLATISIYLLDVAVNVVM). At 162 to 186 (ASTRSLIVDSVRSDQQHEANSWAGR) the chain is on the cytoplasmic side. A helical transmembrane segment spans residues 187-207 (MIGVGNVLGYLLGYLPLYRIF). At 208–216 (SFLNFTQLQ) the chain is on the extracellular side. Residues 217-237 (VFCVLASISLVLTVTITTIFV) traverse the membrane as a helical segment. At 238–280 (SERRFPPVEHEKSVAGEIFEFFTTMRQSITALPFTLKRICFVQ) the chain is on the cytoplasmic side. Residues 281–301 (FFAYFGWFPFLFYITTYVGIL) form a helical membrane-spanning segment. The Extracellular portion of the chain corresponds to 302 to 322 (YLRHAPKGHEEDWDMATRQGS). The chain crosses the membrane as a helical span at residues 323–343 (FALLLFAIISLAANTALPLLL). Over 344–424 (EDTEDDEEDE…SKVQIKGLTL (81 aa)) the chain is Cytoplasmic. The interval 368-399 (NDLGNIRTGTNTPRLGNLSETTSFRSENEPSR) is disordered. The segment covering 374–392 (RTGTNTPRLGNLSETTSFR) has biased composition (polar residues). A helical membrane pass occupies residues 425–445 (PILWLSSHVLFGVCMLSTIFL). At 446–452 (QTSWQAQ) the chain is on the extracellular side. The chain crosses the membrane as a helical span at residues 453–473 (AMVAICGLSWACTLWIPYSLF). Topologically, residues 474 to 494 (SSEIGKLGLRESSGKMIGVHN) are cytoplasmic. A helical transmembrane segment spans residues 495–515 (VFISAPQVLSTIIATIVFIQS). Residues 516–521 (EGSHRD) are Extracellular-facing. A helical membrane pass occupies residues 522–542 (IADNSIAWVLRIGGISAFLAA). Over 543–553 (YQCRHLLPINF) the chain is Cytoplasmic.

This sequence belongs to the glycoside-pentoside-hexuronide (GPH) cation symporter transporter (TC 2.A.2.4) family.

It is found in the membrane. Functionally, responsible for the transport of maltose and sucrose into the cell, with the concomitant uptake of protons (symport system). The polypeptide is General alpha-glucoside permease (sut1) (Schizosaccharomyces pombe (strain 972 / ATCC 24843) (Fission yeast)).